We begin with the raw amino-acid sequence, 156 residues long: Crossover junction endodeoxyribonuclease RuvC (156 aa).

Active-site residues include Asp-7, Glu-67, and Asp-140. Asp-7, Glu-67, and Asp-140 together coordinate Mg(2+).

The protein belongs to the RuvC family. As to quaternary structure, homodimer which binds Holliday junction (HJ) DNA. The HJ becomes 2-fold symmetrical on binding to RuvC with unstacked arms; it has a different conformation from HJ DNA in complex with RuvA. In the full resolvosome a probable DNA-RuvA(4)-RuvB(12)-RuvC(2) complex forms which resolves the HJ. The cofactor is Mg(2+).

It is found in the cytoplasm. It catalyses the reaction Endonucleolytic cleavage at a junction such as a reciprocal single-stranded crossover between two homologous DNA duplexes (Holliday junction).. Functionally, the RuvA-RuvB-RuvC complex processes Holliday junction (HJ) DNA during genetic recombination and DNA repair. Endonuclease that resolves HJ intermediates. Cleaves cruciform DNA by making single-stranded nicks across the HJ at symmetrical positions within the homologous arms, yielding a 5'-phosphate and a 3'-hydroxyl group; requires a central core of homology in the junction. The consensus cleavage sequence is 5'-(A/T)TT(C/G)-3'. Cleavage occurs on the 3'-side of the TT dinucleotide at the point of strand exchange. HJ branch migration catalyzed by RuvA-RuvB allows RuvC to scan DNA until it finds its consensus sequence, where it cleaves and resolves the cruciform DNA. The protein is Crossover junction endodeoxyribonuclease RuvC of Rickettsia felis (strain ATCC VR-1525 / URRWXCal2) (Rickettsia azadi).